Reading from the N-terminus, the 38-residue chain is Phospholipase A2 2 (38 aa).

Ca(2+)-binding residues include Tyr28, Gly30, and Gly32.

It belongs to the phospholipase A2 family. Group I subfamily. The cofactor is Ca(2+). As to expression, expressed by the venom gland.

It localises to the secreted. The catalysed reaction is a 1,2-diacyl-sn-glycero-3-phosphocholine + H2O = a 1-acyl-sn-glycero-3-phosphocholine + a fatty acid + H(+). Functionally, snake venom phospholipase A2 (PLA2) that inhibits neuromuscular transmission by blocking acetylcholine release from the nerve termini. PLA2 catalyzes the calcium-dependent hydrolysis of the 2-acyl groups in 3-sn-phosphoglycerides. This Calliophis bivirgatus (Blue Malaysian coral snake) protein is Phospholipase A2 2.